Consider the following 150-residue polypeptide: Nascent polypeptide-associated complex subunit beta (150 aa).

Disordered stretches follow at residues 1–45 and 123–150; these read MADV…LQQS and YQNMQQKKDDDDEIPDLVAGESFENKVE. A compositionally biased stretch (basic residues) spans 23–32; it reads TPRRKVKRAP. Positions 36–101 constitute an NAC-A/B domain; that stretch reads GADDKKLQQS…GEDKELTELV (66 aa).

Belongs to the NAC-beta family. As to quaternary structure, part of the nascent polypeptide-associated complex (NAC), consisting of EGD2 and EGD1. NAC associates with ribosomes via EGD1.

It is found in the cytoplasm. It localises to the nucleus. In terms of biological role, component of the nascent polypeptide-associated complex (NAC), a dynamic component of the ribosomal exit tunnel, protecting the emerging polypeptides from interaction with other cytoplasmic proteins to ensure appropriate nascent protein targeting. The NAC complex also promotes mitochondrial protein import by enhancing productive ribosome interactions with the outer mitochondrial membrane and blocks the inappropriate interaction of ribosomes translating non-secretory nascent polypeptides with translocation sites in the membrane of the endoplasmic reticulum. EGD1 may act as a transcription factor that exert a negative effect on the expression of several genes that are transcribed by RNA polymerase II. In Chaetomium globosum (strain ATCC 6205 / CBS 148.51 / DSM 1962 / NBRC 6347 / NRRL 1970) (Soil fungus), this protein is Nascent polypeptide-associated complex subunit beta (EGD1).